The chain runs to 501 residues: Cytokinin dehydrogenase 2 (501 aa).

Residues 1 to 22 (MANLRLMITLITVLMITKSSNG) form the signal peptide. N-linked (GlcNAc...) asparagine glycans are attached at residues asparagine 32 and asparagine 51. Residues 53–226 (TTVTPGGVIC…TRARIVLDHA (174 aa)) form the FAD-binding PCMH-type domain. The FAD site is built by alanine 87, glycine 89, and glycine 91. Histidine 92 carries the pros-8alpha-FAD histidine modification. Positions 93 and 97 each coordinate FAD. Asparagine 107 carries N-linked (GlcNAc...) asparagine glycosylation. Positions 150, 155, 161, 165, 216, 460, 495, and 498 each coordinate FAD.

It belongs to the oxygen-dependent FAD-linked oxidoreductase family. FAD is required as a cofactor. Expressed in the shoot apex, in stipules, and occasionally in the most apical part of the inflorescence stems. Not detected in roots.

The protein resides in the endoplasmic reticulum. It is found in the secreted. The protein localises to the extracellular space. The enzyme catalyses N(6)-dimethylallyladenine + A + H2O = 3-methyl-2-butenal + adenine + AH2. Its function is as follows. Catalyzes the oxidation of cytokinins, a family of N(6)-substituted adenine derivatives that are plant hormones, where the substituent is an isopentenyl group. Modulates asymmetric cytokinin signaling in emerged lateral roots. Its activity determines cell elongation and number in emerged lateral roots and defines angular growth of lateral roots. This Arabidopsis thaliana (Mouse-ear cress) protein is Cytokinin dehydrogenase 2 (CKX2).